A 708-amino-acid chain; its full sequence is Nucleolar protein 11-like (708 aa).

The protein resides in the nucleus. The protein localises to the nucleolus. In terms of biological role, ribosome biogenesis factor. May be required for both optimal rDNA transcription and pre-rRNA processing. This is Nucleolar protein 11-like (nol11) from Danio rerio (Zebrafish).